We begin with the raw amino-acid sequence, 3164 residues long: MGGGNNTNPGGPVHKQAGSLASRAHMIAGTPPHSTMERGGDRDIVVTGARNQFAPDLEPGGSVSCMRSSLSFLSLIFDVGPRDVLSAEAIEGCLVEGGEWTRATAGPGPPRMCSIVELPNFLEYPGARGGLRCVFSRVYGEVGFFGEPAAGLLETQCPAHTFFAGPWALRPLSYTLLTIGPLGMGLFRDGDTAYLFDPHGLPEGTPAFIAKVRAGDMYPYLTYYTRDRPDVRWAGAMVFFVPSGPEPAAPADLTAAALHLYGASETYLQDEAFSERRVAITHPLRGEIAGLGEPCVGVGPREGVGGPGPHPPTAAQSPPPTRARRDDRASETSRGTAGPSAKPEAKRPNRAPDDVWAVALKGTPPTDPPSADPPSADPPSAIPPPPPSAPKTPAAEAAEEDDDDMRVLEMGVVPVGRHRARYSAGLPKRRRPTWTPPSSVEDLTSGEKTKRSAPPAKTKKKSTPKGKTPVGAAVPASVPEPVLASAPPDPAGPPVAEAGEDDGPTVPASSQALEALKTRRSPEPPGADLAQLFEAHPNVAATAVKFTACSAALAREVAACSRLTISALRSPYPASPGLLELCVIFFFERVLAFLIENGARTHTQAGVAGPAAALLEFTLNMLPWKTAVGDFLASTRLSLADVAAHLPLVQHVLDENSLIGRLALAKLILVARDVIRETDAFYGELADLELQLRAAPPANLYTRLGEWLLERSQAHPDTLFAPATPTHPEPLLYRVQALAKFARGEEIRVEAEDRQMREALDALARGVDAVSQHAGPLGVMPAPAGAAPQGAPRPPPLGPEAVQVRLEEVRTQARRAIEGAVKEYFYRGAVYSAKALQASDNNDRRFHVASAAVVPVVQLLESLPVFDQHTRDIAQRAAIPAPPPIATSPTAILLRDLIQRGQTLDAPEDLAAWLSVLTDAANQGLIERKPLDELARSIRDINDQQARRSSGLAELRRFDALDAALGQQLDSDAAFVPAPGASPYPDDGGLSPEATRMAEEALRQARAMDAAKLTAELAPDARARLRERARSLEAMLEGARERAKVARDAREKFLHKLQGVLRPLPDFVGLKACPAVLATLRASLPAGWSDLPEAVRGAPPEVTAALRADMWGLLGQYRDALEHPTPDTATALSGLHPSFVVVLKNLFADAPETPFLLQFFADHAPIIAHAVSNAINAGSAAVATADPASTVDAAVRAHRVLVDAVTALGAAASDPASPLAFLAAMADSAAGYVKATRLALDARVAIAQLTTLGSAAADLVVQVRRAANQPEGEHASLIQAATRATTGARESLAGHEGRFGGLLHAEGTAGDHSPSGRALQELGKVIGATRRRADELEAATADLREKMAAQRARSSHERWAADVEAVLDRVESGAEFDVVELRRLQALAGTHGYNPRDFRKRAEQALGTNAKAVTLALETALAFNPYTPENQRHPMLPPLAAIHRIDWSAAFGAAADTYADMFRVDTEPLARLLRLAGGLLERAQANDGFIDYHEAVLHLSEDLGGVPALRQYVPFFQKGYAEYVDIRDRLDALRADARRAIGSVALDLAAAAEEISAVRNDPAAAAELVRAGVTLPCPSEDALVACVAALERVDQSPVKDTAYAHYVAFVTRQDLADTKDAVVRAKQQRAEATERVTAGLREVLAARERRAQLEAEGLANLKTLLKVVAVPATVAKTLDQARSAEEIADQVEILVDQTEKARELDVQAVAWLEHAQRTFETHPLSAASGDGPGLLTRQGARLQALFDTRRRVEALRRSLEEAEAEWDEVWGRFGRVRGGAWKSPEGFRAACEQLRALQDTTNTVSGLRAQRDYERLPAKYQGVLGAKSAERAGAVEELGGRVAQHADLSARLRDEVVPRVAWEMNFDTLGGLLAEFDAVAGDLAPWAVEEFRGARELIQRRMGLYSAYAKATGQTGAGAAAAPAPLLVDLRALDARARASAPPGQEADPQMLRRRGEAYLRVSGGPGPLVLREATSTLDRPFAPSFLVPDGTPLQYALCFPAVTDKLGALLMCPEAACIRPPLPTDTLESASTVTAMYVLTVINRLQLALSDAQAANFQLFGRFVRHRQARWGASMDAAAELYVALVATTLTREFGCRWAQLEWGGDAAAPGPPLGPQSSTRHRVSFNENDVLVALVASSPEHIYTFWRLDLVRQHEYMHLTLPRAFQNAADSMLFVQRLTPHPDARIRVLPAFSAGGPPTRGLMFGTRLADWRRGKLSETDPLAPWRSVPELGTERGAALGKLSPAQALAAVSVLGRMCLPSTALVALWTCMFPDDYTEYDSFDALLTARLESGQTLSPSGGREASPPAPPNALYRPTGQHVAVPAAATHRTPAARVTAMDLVLAAVLLGAPVVVALRNTTAFSRESELELCLTLFDSRARGPDAALRDAVSSDIETWAVRLLHADLNPIENACLAAQLPRLSALIAERPLARGPPCLVLVDISMTPVAVLWENPDPPGPPDVRFVGSEATEELPFVAGGEDVLAASATDEDPFLARAILGRPFDASLLSGELFPGHPVYQRAPDDQSPSVPNPTPGPVDLVGAEGSLGPGSLAPTLFTDATPGEPVPPRMWAWIHGLEELASDDSGGPAPLLAPDPLSPTADQSVPTSQCAPRPPGPAVTAREARPGVPAESTRPAPVGPRDDFRRLPSPQSSPAPPDATAPRPPASSRASAASSSGSRARRHRRARSLARATQASATTQGWRPPALPDTVAPVTDFARPPAPPKPPEPAPHALVSGVPLPLGPQAAGQASPALPIDPVPPPVATGTVLPGGENRRPPLTSGPAPTPPRVPVGGPQRRLTRPAVASLSESRESLPSPWDPADPTAPVLGRNPAEPTSSSPAGPSPPPPAVQPVAPPPTSGPPPTYLTLEGGVAPGGPVSRRPTTRQPVATPTTSARPRGHLTVSRLSAPQPQPQPQPQPQPQPQPQPQPQPQPQPQPQPQPQPQPQPQPQPQPQPQPQPQPQPQPQPQPQPQPQPQPQNGHVAPGEYPAVRFRAPQNRPSVPASASSTNPRTGSSLSGVSSWASSLALHIDATPPPVSLLQTLYVSDDEDSDATSLFLSDSEAEALDPLPGEPHSPITNEPFSALSADDSQEVTRLQFGPPPVSANAVLSRRYVQRTGRSALAVLIRACYRLQQQLQRTRRALLHHSDAVLTSLHHVRMLLG.

Residues 1 to 273 (MGGGNNTNPG…SETYLQDEAF (273 aa)) form a deubiquitination activity region. The Peptidase C76 domain maps to 45-263 (VVTGARNQFA…TAAALHLYGA (219 aa)). Catalysis depends on residues cysteine 65, aspartate 197, and histidine 199. Residues 289–508 (AGLGEPCVGV…GEDDGPTVPA (220 aa)) form a disordered region. Pro residues predominate over residues 308-321 (GPHPPTAAQSPPPT). Basic and acidic residues predominate over residues 343 to 353 (PEAKRPNRAPD). Positions 365–390 (PTDPPSADPPSADPPSAIPPPPPSAP) are enriched in pro residues. Residues 416-432 (GRHRARYSAGLPKRRRP) show a composition bias toward basic residues. A nuclear localization signal region spans residues 426–432 (LPKRRRP). Residues 579–609 (LELCVIFFFERVLAFLIENGARTHTQAGVAG) form an interaction with inner tegument protein region. The segment at 579–609 (LELCVIFFFERVLAFLIENGARTHTQAGVAG) is interaction with UL37. Disordered stretches follow at residues 2296-2318 (QTLS…LYRP), 2518-2552 (HPVY…LGPG), and 2583-3020 (ASDD…SLSG). Positions 2653-2667 (QSSPAPPDATAPRPP) are enriched in pro residues. The span at 2668-2680 (ASSRASAASSSGS) shows a compositional bias: low complexity. Residues 2681-2690 (RARRHRRARS) show a composition bias toward basic residues. A compositionally biased stretch (pro residues) spans 2722–2732 (PPAPPKPPEPA). Residues 2834–2843 (PAEPTSSSPA) are compositionally biased toward low complexity. Residues 2844–2866 (GPSPPPPAVQPVAPPPTSGPPPT) are compositionally biased toward pro residues. Positions 2886-2897 (TRQPVATPTTSA) are enriched in polar residues. 35 repeat units span residues 2911-2912 (PQ), 2913-2914 (PQ), 2915-2916 (PQ), 2917-2918 (PQ), 2919-2920 (PQ), 2921-2922 (PQ), 2923-2924 (PQ), 2925-2926 (PQ), 2927-2928 (PQ), 2929-2930 (PQ), 2931-2932 (PQ), 2933-2934 (PQ), 2935-2936 (PQ), 2937-2938 (PQ), 2939-2940 (PQ), 2941-2942 (PQ), 2943-2944 (PQ), 2945-2946 (PQ), 2947-2948 (PQ), 2949-2950 (PQ), 2951-2952 (PQ), 2953-2954 (PQ), 2955-2956 (PQ), 2957-2958 (PQ), 2959-2960 (PQ), 2961-2962 (PQ), 2963-2964 (PQ), 2965-2966 (PQ), 2967-2968 (PQ), 2969-2970 (PQ), 2971-2972 (PQ), 2973-2974 (PQ), 2975-2976 (PQ), 2977-2978 (PQ), and 2979-2980 (PQ). The segment at 2911-2980 (PQPQPQPQPQ…PQPQPQPQPQ (70 aa)) is 35 X 2 AA tandem repeats of P-Q. Residues 2912–2978 (QPQPQPQPQP…PQPQPQPQPQ (67 aa)) show a composition bias toward pro residues. Residues 2999–3014 (NRPSVPASASSTNPRT) are compositionally biased toward polar residues.

It belongs to the herpesviridae large tegument protein family. As to quaternary structure, interacts with host CUL1 and CUL4A; these interactions inhibit the E3 ligase activity of cullins. Interacts with inner tegument protein. Interacts with capsid vertex specific component CVC2. Interacts with the major capsid protein/MCP. Interacts with VP16; this interaction is important for outer tegument association to the capsid. May form homodimers. Proteolytically processed, possibly into several polypeptides. Enzymatic activity is only detectable following cleavage of the UL36 protein, which occurs late during viral replication.

Its subcellular location is the virion tegument. The protein resides in the host cytoplasm. It is found in the host nucleus. It catalyses the reaction Thiol-dependent hydrolysis of ester, thioester, amide, peptide and isopeptide bonds formed by the C-terminal Gly of ubiquitin (a 76-residue protein attached to proteins as an intracellular targeting signal).. Its function is as follows. Large tegument protein that plays multiple roles in the viral cycle. During viral entry, remains associated with the capsid while most of the tegument is detached and participates in the capsid transport toward the host nucleus. Plays a role in the routing of the capsid at the nuclear pore complex and subsequent uncoating. Within the host nucleus, acts as a deneddylase and promotes the degradation of nuclear CRLs (cullin-RING ubiquitin ligases) and thereby stabilizes nuclear CRL substrates, while cytoplasmic CRLs remain unaffected. These modifications prevent host cell cycle S-phase progression and create a favorable environment allowing efficient viral genome replication. Participates later in the secondary envelopment of capsids. Indeed, plays a linker role for the association of the outer viral tegument to the capsids together with the inner tegument protein. In Human herpesvirus 1 (strain 17) (HHV-1), this protein is Large tegument protein deneddylase.